The chain runs to 351 residues: uncharacterized protein (351 aa).

Residues D215, D226, H290, E319, and E333 each coordinate Mn(2+).

The protein belongs to the peptidase M24B family. The cofactor is Mn(2+).

This is an uncharacterized protein from Staphylococcus aureus (strain bovine RF122 / ET3-1).